Reading from the N-terminus, the 428-residue chain is Glucose-1-phosphate adenylyltransferase (428 aa).

Residues Tyr-99, Gly-164, 179 to 180 (EK), and Ser-190 each bind alpha-D-glucose 1-phosphate.

This sequence belongs to the bacterial/plant glucose-1-phosphate adenylyltransferase family. In terms of assembly, homotetramer.

It catalyses the reaction alpha-D-glucose 1-phosphate + ATP + H(+) = ADP-alpha-D-glucose + diphosphate. The protein operates within glycan biosynthesis; glycogen biosynthesis. In terms of biological role, involved in the biosynthesis of ADP-glucose, a building block required for the elongation reactions to produce glycogen. Catalyzes the reaction between ATP and alpha-D-glucose 1-phosphate (G1P) to produce pyrophosphate and ADP-Glc. The protein is Glucose-1-phosphate adenylyltransferase of Thermomicrobium roseum (strain ATCC 27502 / DSM 5159 / P-2).